Here is a 79-residue protein sequence, read N- to C-terminus: Conotoxin ArMKLT2-031 (79 aa).

The first 22 residues, 1-22 (MKLTCVLIIAVLFLTACQLTTG), serve as a signal peptide directing secretion. Residues 23–46 (ETYSRGEQKDHALRSTDKNSKLTR) constitute a propeptide that is removed on maturation. The residue at position 47 (Q47) is a Pyrrolidone carboxylic acid. Cystine bridges form between C48–C62, C55–C66, and C61–C73.

Belongs to the conotoxin O1 superfamily. Expressed by the venom duct.

The protein localises to the secreted. The chain is Conotoxin ArMKLT2-031 from Conus arenatus (Sand-dusted cone).